The primary structure comprises 471 residues: Collagenase 3 (471 aa).

Positions 1-19 (MQPGVLAACLLLSWTHCWS) are cleaved as a signal peptide. A propeptide spans 20-103 (LPLLNSNEDD…PRCGVPDVGE (84 aa)) (activation peptide). A Cysteine switch motif is present at residues 94-101 (PRCGVPDV). Residue cysteine 96 participates in Zn(2+) binding. Asparagine 117 carries N-linked (GlcNAc...) asparagine glycosylation. Aspartate 128 contributes to the Ca(2+) binding site. N-linked (GlcNAc...) asparagine glycans are attached at residues asparagine 152 and asparagine 158. Aspartate 162 contributes to the Ca(2+) binding site. Histidine 172 and aspartate 174 together coordinate Zn(2+). The segment at 176 to 246 (YPFDGPSGLL…GALMFPIYTY (71 aa)) is interaction with TIMP2. Ca(2+) contacts are provided by aspartate 179, glycine 180, serine 182, and leucine 184. Position 187 (histidine 187) interacts with Zn(2+). Positions 194, 196, and 198 each coordinate Ca(2+). Position 200 (histidine 200) interacts with Zn(2+). Ca(2+) contacts are provided by aspartate 202, aspartate 203, and glutamate 205. Histidine 222 serves as a coordination point for Zn(2+). Glutamate 223 is a catalytic residue. Residues histidine 226, histidine 232, and methionine 240 each coordinate Zn(2+). A disordered region spans residues 263–284 (QSLYGPGDEDPNPKHPKTPDKC). The interaction with collagen stretch occupies residues 268 to 471 (PGDEDPNPKH…VMPTNSLLWC (204 aa)). The span at 273 to 284 (PNPKHPKTPDKC) shows a compositional bias: basic and acidic residues. Hemopexin repeat units lie at residues 281–330 (PDKC…WPEL), 331–377 (PNRI…GFPR), 379–427 (VKKI…FPGI), and 428–471 (GGKV…LLWC). A disulfide bond links cysteine 284 and cysteine 471. Positions 291, 293, 335, and 337 each coordinate Ca(2+). Tyrosine 366 bears the Phosphotyrosine; by PKDCC mark. Positions 383 and 385 each coordinate Ca(2+). N-linked (GlcNAc...) asparagine glycosylation occurs at asparagine 409. Positions 432 and 434 each coordinate Ca(2+).

It belongs to the peptidase M10A family. Ca(2+) is required as a cofactor. The cofactor is Zn(2+). In terms of processing, the proenzyme is activated by removal of the propeptide; this cleavage can be effected by other matrix metalloproteinases, such as MMP2, MMP3 and MMP14 and may involve several cleavage steps. Cleavage can also be autocatalytic, after partial maturation by another protease or after treatment with 4-aminophenylmercuric acetate (APMA) (in vitro). N-glycosylated. Post-translationally, tyrosine phosphorylated by PKDCC/VLK.

Its subcellular location is the secreted. The protein localises to the extracellular space. The protein resides in the extracellular matrix. Functionally, plays a role in the degradation of extracellular matrix proteins including fibrillar collagen, fibronectin, TNC and ACAN. Cleaves triple helical collagens, including type I, type II and type III collagen, but has the highest activity with soluble type II collagen. Can also degrade collagen type IV, type XIV and type X. May also function by activating or degrading key regulatory proteins, such as TGFB1 and CCN2. Plays a role in wound healing, tissue remodeling, cartilage degradation, bone development, bone mineralization and ossification. Required for normal embryonic bone development and ossification. Plays a role in the healing of bone fractures via endochondral ossification. Plays a role in wound healing, probably by a mechanism that involves proteolytic activation of TGFB1 and degradation of CCN2. Plays a role in keratinocyte migration during wound healing. May play a role in cell migration and in tumor cell invasion. The chain is Collagenase 3 (MMP13) from Oryctolagus cuniculus (Rabbit).